A 418-amino-acid polypeptide reads, in one-letter code: AP-3 complex subunit mu-2 (418 aa).

The MHD domain occupies 176 to 417 (NNEAYFDVVE…MTKAGKFQVR (242 aa)).

This sequence belongs to the adaptor complexes medium subunit family. As to quaternary structure, adaptor protein complex 3 (AP-3) is a heterotetramer composed of two large adaptins (delta-type subunit AP3D1 and beta-type subunit AP3B1 or AP3B2), a medium adaptin (mu-type subunit AP3M1 or AP3M2) and a small adaptin (sigma-type subunit APS1 or AP3S2). AP-3 associates with the BLOC-1 complex.

It localises to the golgi apparatus. It is found in the cytoplasmic vesicle membrane. Its function is as follows. Component of the adaptor complexes which link clathrin to receptors in coated vesicles. Clathrin-associated protein complexes are believed to interact with the cytoplasmic tails of membrane proteins, leading to their selection and concentration. Ap47 is a subunit of the plasma membrane adaptor. In concert with the BLOC-1 complex, AP-3 is required to target cargos into vesicles assembled at cell bodies for delivery into neurites and nerve terminals. This Rattus norvegicus (Rat) protein is AP-3 complex subunit mu-2 (Ap3m2).